The following is an 87-amino-acid chain: UPF0235 protein TGRD_618 (87 aa).

The protein belongs to the UPF0235 family.

This chain is UPF0235 protein TGRD_618, found in Endomicrobium trichonymphae.